Here is a 168-residue protein sequence, read N- to C-terminus: Endoribonuclease YbeY (168 aa).

Zn(2+) contacts are provided by His-126, His-130, and His-136.

This sequence belongs to the endoribonuclease YbeY family. The cofactor is Zn(2+).

The protein resides in the cytoplasm. Its function is as follows. Single strand-specific metallo-endoribonuclease involved in late-stage 70S ribosome quality control and in maturation of the 3' terminus of the 16S rRNA. The chain is Endoribonuclease YbeY from Rhizobium meliloti (strain 1021) (Ensifer meliloti).